The sequence spans 318 residues: Ubiquitin-like domain-containing CTD phosphatase 1 (318 aa).

The region spanning 3-81 is the Ubiquitin-like domain; the sequence is LSLIIKWGGQ…IMMMGTREES (79 aa). The region spanning 133–294 is the FCP1 homology domain; the sequence is PREGKKLLVL…LKLTQYLKEI (162 aa). Mg(2+)-binding residues include D143, D145, and D253.

Mg(2+) serves as cofactor.

Its subcellular location is the nucleus. It carries out the reaction O-phospho-L-seryl-[protein] + H2O = L-seryl-[protein] + phosphate. The enzyme catalyses O-phospho-L-threonyl-[protein] + H2O = L-threonyl-[protein] + phosphate. Its function is as follows. Dephosphorylates 26S nuclear proteasomes, thereby decreasing their proteolytic activity. Recruited to the 19S regulatory particle of the 26S proteasome where it dephosphorylates 19S component PSMC2 which impairs PSMC2 ATPase activity and disrupts 26S proteasome assembly. Has also been reported to stimulate the proteolytic activity of the 26S proteasome. The polypeptide is Ubiquitin-like domain-containing CTD phosphatase 1 (UBLCP1) (Gallus gallus (Chicken)).